The sequence spans 449 residues: Exodeoxyribonuclease 7 large subunit (449 aa).

The protein belongs to the XseA family. As to quaternary structure, heterooligomer composed of large and small subunits.

It is found in the cytoplasm. The enzyme catalyses Exonucleolytic cleavage in either 5'- to 3'- or 3'- to 5'-direction to yield nucleoside 5'-phosphates.. Bidirectionally degrades single-stranded DNA into large acid-insoluble oligonucleotides, which are then degraded further into small acid-soluble oligonucleotides. The polypeptide is Exodeoxyribonuclease 7 large subunit (Salmonella schwarzengrund (strain CVM19633)).